The sequence spans 874 residues: Alanine--tRNA ligase (874 aa).

The Zn(2+) site is built by His564, His568, Cys665, and His669.

It belongs to the class-II aminoacyl-tRNA synthetase family. The cofactor is Zn(2+).

Its subcellular location is the cytoplasm. It catalyses the reaction tRNA(Ala) + L-alanine + ATP = L-alanyl-tRNA(Ala) + AMP + diphosphate. In terms of biological role, catalyzes the attachment of alanine to tRNA(Ala) in a two-step reaction: alanine is first activated by ATP to form Ala-AMP and then transferred to the acceptor end of tRNA(Ala). Also edits incorrectly charged Ser-tRNA(Ala) and Gly-tRNA(Ala) via its editing domain. In Acidovorax sp. (strain JS42), this protein is Alanine--tRNA ligase.